Reading from the N-terminus, the 403-residue chain is Acetylornithine aminotransferase (403 aa).

Residues 107-108 (GA) and Phe140 contribute to the pyridoxal 5'-phosphate site. Position 143 (Arg143) interacts with N(2)-acetyl-L-ornithine. Pyridoxal 5'-phosphate is bound at residue 225 to 228 (DEVQ). Lys254 bears the N6-(pyridoxal phosphate)lysine mark. Ser282 is a binding site for N(2)-acetyl-L-ornithine. Thr283 is a pyridoxal 5'-phosphate binding site.

The protein belongs to the class-III pyridoxal-phosphate-dependent aminotransferase family. ArgD subfamily. In terms of assembly, homodimer. Requires pyridoxal 5'-phosphate as cofactor.

The protein resides in the cytoplasm. The enzyme catalyses N(2)-acetyl-L-ornithine + 2-oxoglutarate = N-acetyl-L-glutamate 5-semialdehyde + L-glutamate. The protein operates within amino-acid biosynthesis; L-arginine biosynthesis; N(2)-acetyl-L-ornithine from L-glutamate: step 4/4. The chain is Acetylornithine aminotransferase from Vibrio cholerae serotype O1 (strain ATCC 39315 / El Tor Inaba N16961).